Here is a 189-residue protein sequence, read N- to C-terminus: Transcriptional repressor NrdR (189 aa).

Residues C3–C34 fold into a zinc finger. The ATP-cone domain occupies L46–D136. Residues R152–E189 form a disordered region. The segment covering E180–E189 has biased composition (basic and acidic residues).

Belongs to the NrdR family. Zn(2+) serves as cofactor.

Functionally, negatively regulates transcription of bacterial ribonucleotide reductase nrd genes and operons by binding to NrdR-boxes. The polypeptide is Transcriptional repressor NrdR (Saccharopolyspora erythraea (strain ATCC 11635 / DSM 40517 / JCM 4748 / NBRC 13426 / NCIMB 8594 / NRRL 2338)).